The chain runs to 221 residues: 3-phospho-D-glycerate guanylyltransferase (221 aa).

The protein belongs to the CofC family.

It carries out the reaction (2R)-3-phosphoglycerate + GTP + H(+) = 3-[(R)-glyceryl]-diphospho-5'-guanosine + diphosphate. It catalyses the reaction (2S)-2-phospholactate + GTP + H(+) = (2S)-lactyl-2-diphospho-5'-guanosine + diphosphate. Its pathway is cofactor biosynthesis; coenzyme F420 biosynthesis. Functionally, guanylyltransferase that catalyzes the activation of (2R)-3-phosphoglycerate (3PG) as 3-[(R)-glyceryl]-diphospho-5'-guanosine, via the condensation of 3PG with GTP. It is involved in the biosynthesis of a derivative of the hydride carrier cofactor coenzyme F420, 3PG-F420. Can also use (2S)-2-phospholactate (2-PL), with lower turnover, and has weak activity with phosphoenolpyruvate (PEP). The protein is 3-phospho-D-glycerate guanylyltransferase of Mycetohabitans rhizoxinica (strain DSM 19002 / CIP 109453 / HKI 454) (Paraburkholderia rhizoxinica).